The following is a 380-amino-acid chain: Protein Wnt-5a (380 aa).

Positions 1-37 (MKKPIGILSPGVALGTAGGAMSSKFFLMALATFFSFA) are cleaved as a signal peptide. Positions 38 to 61 (QVVIEANSWWSLGMNNPVQMSEVY) are excised as a propeptide. Residues Cys104 and Cys115 are joined by a disulfide bond. 2 N-linked (GlcNAc...) asparagine glycosylation sites follow: Asn114 and Asn120. Intrachain disulfides connect Cys154–Cys162, Cys164–Cys182, Cys238–Cys252, Cys240–Cys247, Cys309–Cys340, Cys325–Cys335, Cys339–Cys379, Cys355–Cys370, Cys357–Cys367, and Cys362–Cys363. Residue Ser244 is the site of O-palmitoleoyl serine; by PORCN attachment. N-linked (GlcNAc...) asparagine glycans are attached at residues Asn312 and Asn326.

It belongs to the Wnt family. In terms of assembly, forms a soluble 1:1 complex with AFM; this prevents oligomerization and is required for prolonged biological activity. The complex with AFM may represent the physiological form in body fluids. Homooligomer; disulfide-linked, leading to inactivation. Interacts with PORCN. Interacts with WLS. Interacts with glypican GCP3. Interacts with PKD1 (via extracellular domain). Interacts with TMEM67. In terms of processing, glycosylation is necessary for secretion but not for activity. Post-translationally, palmitoleoylation is required for efficient binding to frizzled receptors. Depalmitoleoylation leads to Wnt signaling pathway inhibition. Proteolytic processing by TIKI1 and TIKI2 promotes oxidation and formation of large disulfide-bond oligomers, leading to inactivation of WNT5A. As to expression, expressed in a gradient at the caudal end of the embryo during gastrulation and later in the distal-most aspect of several structures that extend from the body such as the limbs and genital tubercle.

The protein localises to the secreted. It localises to the extracellular space. Its subcellular location is the extracellular matrix. Functionally, ligand for members of the frizzled family of seven transmembrane receptors. Can activate or inhibit canonical Wnt signaling, depending on receptor context. In the presence of FZD4, activates beta-catenin signaling. In the presence of ROR2, inhibits the canonical Wnt pathway by promoting beta-catenin degradation through a GSK3-independent pathway which involves down-regulation of beta-catenin-induced reporter gene expression. Suppression of the canonical pathway allows chondrogenesis to occur and inhibits tumor formation. Stimulates cell migration. Decreases proliferation, migration, invasiveness and clonogenicity of carcinoma cells and may act as a tumor suppressor. Mediates motility of melanoma cells. Required during embryogenesis for extension of the primary anterior-posterior axis and for outgrowth of limbs and the genital tubercle. Inhibits type II collagen expression in chondrocytes. This Mus musculus (Mouse) protein is Protein Wnt-5a (Wnt5a).